Here is a 361-residue protein sequence, read N- to C-terminus: RLA class I histocompatibility antigen, alpha chain 19-1 (361 aa).

Residues 1-24 (MGSIPPRTLLLLLAGALTLKDTQA) form the signal peptide. The segment at 25-114 (GSHSMRYFYT…ALRYYNQSAA (90 aa)) is alpha-1. The Extracellular portion of the chain corresponds to 25 to 308 (GSHSMRYFYT…EPPAQPTALI (284 aa)). N110 carries an N-linked (GlcNAc...) asparagine glycan. Residues 115–206 (GSHTFQTMFG…EMGKETLQRA (92 aa)) are alpha-2. 2 cysteine pairs are disulfide-bonded: C125–C188 and C227–C283. Residues 207–298 (DPPKAHVTHH…GLPEPLTLTW (92 aa)) are alpha-3. The region spanning 209-297 (PKAHVTHHPA…EGLPEPLTLT (89 aa)) is the Ig-like C1-type domain. The tract at residues 299 to 308 (EPPAQPTALI) is connecting peptide. Residues 309–329 (VGIVAGVLGVLLILGAVVAVV) traverse the membrane as a helical segment. The Cytoplasmic portion of the chain corresponds to 330-361 (RRKKHSSDGKGGRYTPAAGGHRDQGSDDSLMP). A disordered region spans residues 335–361 (SSDGKGGRYTPAAGGHRDQGSDDSLMP). A phosphoserine mark is found at S355 and S358.

Belongs to the MHC class I family. As to quaternary structure, heterodimer of an alpha chain and a beta chain (beta-2-microglobulin).

The protein resides in the membrane. Its function is as follows. Involved in the presentation of foreign antigens to the immune system. The polypeptide is RLA class I histocompatibility antigen, alpha chain 19-1 (Oryctolagus cuniculus (Rabbit)).